We begin with the raw amino-acid sequence, 178 residues long: Large ribosomal subunit protein uL6 (178 aa).

This sequence belongs to the universal ribosomal protein uL6 family. Part of the 50S ribosomal subunit.

Functionally, this protein binds to the 23S rRNA, and is important in its secondary structure. It is located near the subunit interface in the base of the L7/L12 stalk, and near the tRNA binding site of the peptidyltransferase center. The protein is Large ribosomal subunit protein uL6 of Streptococcus pneumoniae serotype 4 (strain ATCC BAA-334 / TIGR4).